The sequence spans 53 residues: UPF0391 membrane protein Meso_3392 (53 aa).

2 consecutive transmembrane segments (helical) span residues 4 to 24 (WILI…HSLA) and 33 to 53 (ILIA…IAIA).

Belongs to the UPF0391 family.

The protein localises to the cell membrane. This chain is UPF0391 membrane protein Meso_3392, found in Chelativorans sp. (strain BNC1).